Here is a 407-residue protein sequence, read N- to C-terminus: Phospholipase A1-II 7 (407 aa).

Ser230 acts as the Acyl-ester intermediate in catalysis. Catalysis depends on charge relay system residues Ser230, Asp299, and His336.

It belongs to the AB hydrolase superfamily. Lipase family.

Its subcellular location is the cytoplasm. Its function is as follows. Acylhydrolase that catalyzes the hydrolysis of phospholipids at the sn-1 position. This Oryza sativa subsp. indica (Rice) protein is Phospholipase A1-II 7.